We begin with the raw amino-acid sequence, 219 residues long: uncharacterized protein (219 aa).

This sequence to T.pallidum TP_0126.

This is an uncharacterized protein from Treponema pallidum (strain Nichols).